The chain runs to 253 residues: Ubiquinone/menaquinone biosynthesis C-methyltransferase UbiE (253 aa).

S-adenosyl-L-methionine is bound by residues Thr76, Asp97, 125–126 (NA), and Ser142.

The protein belongs to the class I-like SAM-binding methyltransferase superfamily. MenG/UbiE family.

It carries out the reaction a 2-demethylmenaquinol + S-adenosyl-L-methionine = a menaquinol + S-adenosyl-L-homocysteine + H(+). The catalysed reaction is a 2-methoxy-6-(all-trans-polyprenyl)benzene-1,4-diol + S-adenosyl-L-methionine = a 5-methoxy-2-methyl-3-(all-trans-polyprenyl)benzene-1,4-diol + S-adenosyl-L-homocysteine + H(+). It functions in the pathway quinol/quinone metabolism; menaquinone biosynthesis; menaquinol from 1,4-dihydroxy-2-naphthoate: step 2/2. The protein operates within cofactor biosynthesis; ubiquinone biosynthesis. Functionally, methyltransferase required for the conversion of demethylmenaquinol (DMKH2) to menaquinol (MKH2) and the conversion of 2-polyprenyl-6-methoxy-1,4-benzoquinol (DDMQH2) to 2-polyprenyl-3-methyl-6-methoxy-1,4-benzoquinol (DMQH2). This Xanthomonas campestris pv. campestris (strain ATCC 33913 / DSM 3586 / NCPPB 528 / LMG 568 / P 25) protein is Ubiquinone/menaquinone biosynthesis C-methyltransferase UbiE.